A 249-amino-acid chain; its full sequence is Isoamyl acetate-hydrolyzing esterase 1 homolog (249 aa).

The Nucleophile role is filled by Ser24. An N6-succinyllysine modification is found at Lys63. Asp197 acts as the Proton donor in catalysis. His200 serves as the catalytic Proton acceptor.

Belongs to the 'GDSL' lipolytic enzyme family. IAH1 subfamily.

Its function is as follows. Probable lipase. The protein is Isoamyl acetate-hydrolyzing esterase 1 homolog (IAH1) of Bos taurus (Bovine).